The chain runs to 1408 residues: TSET complex member tstA (1408 aa).

3 disordered regions span residues 259 to 347, 998 to 1055, and 1091 to 1139; these read FWPT…SIIA, QQSS…AVGS, and SSSS…TNLN. Residues 266–308 are compositionally biased toward low complexity; sequence NNNNNNNNQQINNNNNNNNNNNNNNNNNNNNNNNNNNNNNQNN. The span at 309–318 shows a compositional bias: polar residues; it reads LINGISSMNL. 2 stretches are compositionally biased toward low complexity: residues 319 to 347 and 998 to 1051; these read SSIT…SIIA and QQSS…ISTS.

This sequence belongs to the TPLATE family. Component of the TSET complex, a heterohexamer composed of tstA, tstB, tstC, tstD, tstE and tstF, which may act in plasma membrane turnover. tstA, tstB, tstC and tstD are likely to be the core complex members with tstE and tstF acting as associated scaffold proteins.

The chain is TSET complex member tstA from Dictyostelium discoideum (Social amoeba).